A 750-amino-acid polypeptide reads, in one-letter code: GRIP and coiled-coil domain-containing protein C27D7.02c (750 aa).

Disordered stretches follow at residues 14–53 (AQGQ…AKNM) and 188–280 (KTVE…RDIA). Composition is skewed to basic and acidic residues over residues 18 to 34 (EEAK…DQLR) and 188 to 198 (KTVETKNDVPE). Residues 28–182 (QEEDQLRRNN…AQSIEQEVIS (155 aa)) adopt a coiled-coil conformation. The span at 201–213 (RPSTDTIGVSSAL) shows a compositional bias: polar residues. A coiled-coil region spans residues 213–243 (LSKKKKKRNRKNQKKKSTKQNIEATTENDAL). Residues 214 to 230 (SKKKKKRNRKNQKKKST) are compositionally biased toward basic residues. Over residues 233 to 251 (NIEATTENDALSESISTPD) the composition is skewed to polar residues. Residues 269–280 (ADSKEEERRDIA) are compositionally biased toward basic and acidic residues. A coiled-coil region spans residues 344–665 (KLVEELTKQL…YEHLQKSFKN (322 aa)). The segment at 672 to 703 (KQQPSNHGRNSSVSRSSSSVEVNSKHPGSDDM) is disordered. The span at 676 to 693 (SNHGRNSSVSRSSSSVEV) shows a compositional bias: low complexity. Residues 694 to 703 (NSKHPGSDDM) are compositionally biased toward basic and acidic residues. Positions 700-748 (SDDMLIDKEYTRNILFQFLEQRDRRPEIVNLLSILLDLSEEQKQKLLSV) constitute a GRIP domain.

The protein resides in the cytoplasm. The chain is GRIP and coiled-coil domain-containing protein C27D7.02c from Schizosaccharomyces pombe (strain 972 / ATCC 24843) (Fission yeast).